Reading from the N-terminus, the 63-residue chain is Anaphase-promoting complex subunit 13 (63 aa).

Positions 36-63 (KTDDTEETNQETQQADAETWRDLALDTQ) are disordered. A compositionally biased stretch (basic and acidic residues) spans 53-63 (ETWRDLALDTQ).

It belongs to the APC13 family. As to quaternary structure, component of the anaphase promoting complex/cyclosome (APC/C) complex. In terms of tissue distribution, expressed constitutively in roots, leaves, stems, buds, flowers, and seeds.

The protein localises to the nucleus. It participates in protein modification; protein ubiquitination. Component of the anaphase promoting complex/cyclosome (APC/C), a cell cycle-regulated E3 ubiquitin ligase that controls progression through mitosis and the G1 phase of the cell cycle. The APC/C complex acts by mediating ubiquitination and subsequent degradation of target proteins. Regulates global growth and development, including phyllotaxis and apical dominance. Required for pollen maturation. Promotes (pri) miRNA transcription of each MIR159 genes. The protein is Anaphase-promoting complex subunit 13 of Arabidopsis thaliana (Mouse-ear cress).